Here is a 73-residue protein sequence, read N- to C-terminus: DNA gyrase inhibitor YacG (73 aa).

The Zn(2+) site is built by Cys14, Cys17, Cys30, and Cys34. The interval 54–73 is disordered; it reads AEQADDTAGPGAAEDDTDSH.

Belongs to the DNA gyrase inhibitor YacG family. Interacts with GyrB. Zn(2+) serves as cofactor.

Inhibits all the catalytic activities of DNA gyrase by preventing its interaction with DNA. Acts by binding directly to the C-terminal domain of GyrB, which probably disrupts DNA binding by the gyrase. The sequence is that of DNA gyrase inhibitor YacG from Hyphomonas neptunium (strain ATCC 15444).